Reading from the N-terminus, the 482-residue chain is Membrane-bound lytic murein transglycosylase F (482 aa).

The signal sequence occupies residues 1–18 (MKGLFLRIITALALLFWA). The tract at residues 19-267 (IDMVFPWQFL…NLKEKYLGHI (249 aa)) is non-LT domain. The tract at residues 268 to 482 (SQFDYVDTRS…NLEEIKENED (215 aa)) is LT domain. Glu312 is an active-site residue. The span at 457-470 (ENQTTNDNANNESA) shows a compositional bias: polar residues. A disordered region spans residues 457–482 (ENQTTNDNANNESAVKNLEEIKENED). A compositionally biased stretch (basic and acidic residues) spans 473–482 (NLEEIKENED).

In the N-terminal section; belongs to the bacterial solute-binding protein 3 family. This sequence in the C-terminal section; belongs to the transglycosylase Slt family.

Its subcellular location is the cell outer membrane. It carries out the reaction Exolytic cleavage of the (1-&gt;4)-beta-glycosidic linkage between N-acetylmuramic acid (MurNAc) and N-acetylglucosamine (GlcNAc) residues in peptidoglycan, from either the reducing or the non-reducing ends of the peptidoglycan chains, with concomitant formation of a 1,6-anhydrobond in the MurNAc residue.. In terms of biological role, murein-degrading enzyme that degrades murein glycan strands and insoluble, high-molecular weight murein sacculi, with the concomitant formation of a 1,6-anhydromuramoyl product. Lytic transglycosylases (LTs) play an integral role in the metabolism of the peptidoglycan (PG) sacculus. Their lytic action creates space within the PG sacculus to allow for its expansion as well as for the insertion of various structures such as secretion systems and flagella. The protein is Membrane-bound lytic murein transglycosylase F of Haemophilus influenzae (strain PittGG).